A 377-amino-acid polypeptide reads, in one-letter code: NADH dehydrogenase [ubiquinone] 1 alpha subcomplex subunit 9, mitochondrial (377 aa).

A mitochondrion-targeting transit peptide spans 1 to 35; that stretch reads MAAAAQSRVVRVLSMSRSAITAIATSVCHGPPCRQ. At Lys-175 the chain carries N6-succinyllysine. N6-acetyllysine is present on residues Lys-189 and Lys-370.

Belongs to the complex I NDUFA9 subunit family. In terms of assembly, complex I is composed of 45 different subunits. This a component of the hydrophobic protein fraction. Interacts with BLOC1S1. Interacts with SLC2A4. Interacts with CLOCK. Interacts with RAB5IF. Requires FAD as cofactor. Acetylated on lysine residues. BLOC1S1 is required for acetylation.

Its subcellular location is the mitochondrion matrix. Accessory subunit of the mitochondrial membrane respiratory chain NADH dehydrogenase (Complex I), that is believed not to be involved in catalysis. Complex I functions in the transfer of electrons from NADH to the respiratory chain. The immediate electron acceptor for the enzyme is believed to be ubiquinone. In Gorilla gorilla gorilla (Western lowland gorilla), this protein is NADH dehydrogenase [ubiquinone] 1 alpha subcomplex subunit 9, mitochondrial (NDUFA9).